We begin with the raw amino-acid sequence, 185 residues long: Elongation factor P (185 aa).

It belongs to the elongation factor P family.

The protein resides in the cytoplasm. It functions in the pathway protein biosynthesis; polypeptide chain elongation. Involved in peptide bond synthesis. Stimulates efficient translation and peptide-bond synthesis on native or reconstituted 70S ribosomes in vitro. Probably functions indirectly by altering the affinity of the ribosome for aminoacyl-tRNA, thus increasing their reactivity as acceptors for peptidyl transferase. This is Elongation factor P from Kosmotoga olearia (strain ATCC BAA-1733 / DSM 21960 / TBF 19.5.1).